We begin with the raw amino-acid sequence, 206 residues long: Small ribosomal subunit protein uS4c (206 aa).

Basic residues-rich tracts occupy residues 1-13 (MSRY…RITR) and 25-34 (QSKKKGRPGQ). Residues 1 to 50 (MSRYRGPKLRITRRLGALPGLTQKQSKKKGRPGQHGKSNEADNSKKTTEY) are disordered. Residues 37–50 (KSNEADNSKKTTEY) are compositionally biased toward basic and acidic residues. The 63-residue stretch at 95–157 (MRLDTICFTL…ATSKNLVEGN (63 aa)) folds into the S4 RNA-binding domain.

It belongs to the universal ribosomal protein uS4 family. Part of the 30S ribosomal subunit. Contacts protein S5. The interaction surface between S4 and S5 is involved in control of translational fidelity.

It localises to the plastid. The protein localises to the chloroplast. In terms of biological role, one of the primary rRNA binding proteins, it binds directly to 16S rRNA where it nucleates assembly of the body of the 30S subunit. With S5 and S12 plays an important role in translational accuracy. The protein is Small ribosomal subunit protein uS4c (rps4) of Trieres chinensis (Marine centric diatom).